The primary structure comprises 511 residues: Cobyric acid synthase (511 aa).

One can recognise a GATase cobBQ-type domain in the interval 251–443; that stretch reads LLDIAIICLP…IHGIFDNDVF (193 aa). The Nucleophile role is filled by cysteine 332. The active site involves histidine 435.

The protein belongs to the CobB/CobQ family. CobQ subfamily.

It participates in cofactor biosynthesis; adenosylcobalamin biosynthesis. Catalyzes amidations at positions B, D, E, and G on adenosylcobyrinic A,C-diamide. NH(2) groups are provided by glutamine, and one molecule of ATP is hydrogenolyzed for each amidation. This Listeria monocytogenes serotype 4b (strain F2365) protein is Cobyric acid synthase.